Consider the following 540-residue polypeptide: Zona pellucida sperm-binding protein 4 (540 aa).

An N-terminal signal peptide occupies residues Met1–Ile24. Topologically, residues Lys25 to Leu515 are extracellular. N-linked (GlcNAc...) asparagine glycosylation is found at Asn76 and Asn97. The region spanning Gly145–Asn187 is the P-type domain. One can recognise a ZP domain in the interval His192–Arg470. Asn206 and Asn223 each carry an N-linked (GlcNAc...) asparagine glycan. Ser296 carries O-linked (GalNAc...) serine glycosylation. Thr306 carries O-linked (GalNAc...) threonine glycosylation. An intrachain disulfide couples Cys371 to Cys446. A propeptide spans Ser467 to Arg540 (removed in mature form). Residues Asn478 and Asn482 are each glycosylated (N-linked (GlcNAc...) asparagine). A helical transmembrane segment spans residues Trp516–Ile536. The Cytoplasmic segment spans residues Arg537 to Arg540.

Belongs to the ZP domain family. ZPB subfamily. Proteolytically cleaved before the transmembrane segment to yield the secreted ectodomain incorporated in the zona pellucida. In terms of tissue distribution, expressed in oocytes (at protein level).

It localises to the zona pellucida. It is found in the cell membrane. Its function is as follows. Component of the zona pellucida, an extracellular matrix surrounding oocytes which mediates sperm binding, induction of the acrosome reaction and prevents post-fertilization polyspermy. The zona pellucida is composed of 3 to 4 glycoproteins, ZP1, ZP2, ZP3, and ZP4. ZP4 may act as a sperm receptor. This chain is Zona pellucida sperm-binding protein 4 (ZP4), found in Oryctolagus cuniculus (Rabbit).